The chain runs to 323 residues: Methionyl-tRNA formyltransferase (323 aa).

A (6S)-5,6,7,8-tetrahydrofolate-binding site is contributed by 117–120 (SLLP).

This sequence belongs to the Fmt family.

The enzyme catalyses L-methionyl-tRNA(fMet) + (6R)-10-formyltetrahydrofolate = N-formyl-L-methionyl-tRNA(fMet) + (6S)-5,6,7,8-tetrahydrofolate + H(+). Attaches a formyl group to the free amino group of methionyl-tRNA(fMet). The formyl group appears to play a dual role in the initiator identity of N-formylmethionyl-tRNA by promoting its recognition by IF2 and preventing the misappropriation of this tRNA by the elongation apparatus. The chain is Methionyl-tRNA formyltransferase from Albidiferax ferrireducens (strain ATCC BAA-621 / DSM 15236 / T118) (Rhodoferax ferrireducens).